Reading from the N-terminus, the 315-residue chain is Diacylglycerol kinase (315 aa).

A DAGKc domain is found at 1–132 (MRKRARIIYN…VDIGKMNNRY (132 aa)). ATP-binding positions include 10–14 (NPTSG), Thr-41, 67–73 (GDGTLNE), and Thr-94. Mg(2+) contacts are provided by Lys-213, Asp-216, and Tyr-218. The active-site Proton acceptor is the Glu-273.

Belongs to the diacylglycerol/lipid kinase family. As to quaternary structure, homodimer. The cofactor is Mg(2+).

It carries out the reaction a 1,2-diacyl-sn-glycerol + ATP = a 1,2-diacyl-sn-glycero-3-phosphate + ADP + H(+). Its function is as follows. Catalyzes the phosphorylation of diacylglycerol (DAG) into phosphatidic acid. Is a key enzyme involved in the production of lipoteichoic acid by reintroducing DAG formed from the breakdown of membrane phospholipids into the phosphatidylglycerol biosynthetic pathway. This is Diacylglycerol kinase (dagK) from Staphylococcus aureus (strain bovine RF122 / ET3-1).